The following is a 196-amino-acid chain: Dimiconin (196 aa).

An N-terminal signal peptide occupies residues Met-1–Gly-21. 2 N-linked (GlcNAc...) asparagine glycosylation sites follow: Asn-62 and Asn-187.

It belongs to the calycin superfamily. Triabin family. Salivary gland.

The protein resides in the secreted. Its function is as follows. Inhibits the intrinsic blood coagulation pathway by blocking the activation of host coagulation factor XII (F12) but not the enzymatic activity of activated F12. The polypeptide is Dimiconin (Triatoma dimidiata (Kissing bug)).